A 339-amino-acid polypeptide reads, in one-letter code: Ketol-acid reductoisomerase (NADP(+)) (339 aa).

Positions 1-182 (MRVYYDRDAD…GGGRSGIIET (182 aa)) constitute a KARI N-terminal Rossmann domain. NADP(+) contacts are provided by residues 24-27 (YGSQ), R48, S51, S53, and 83-86 (DELQ). H108 is a catalytic residue. G134 is a binding site for NADP(+). A KARI C-terminal knotted domain is found at 183–328 (TFREECETDL…GRLRAMMPWI (146 aa)). D191, E195, E227, and E231 together coordinate Mg(2+). Residue S252 coordinates substrate.

It belongs to the ketol-acid reductoisomerase family. Mg(2+) serves as cofactor.

The enzyme catalyses (2R)-2,3-dihydroxy-3-methylbutanoate + NADP(+) = (2S)-2-acetolactate + NADPH + H(+). The catalysed reaction is (2R,3R)-2,3-dihydroxy-3-methylpentanoate + NADP(+) = (S)-2-ethyl-2-hydroxy-3-oxobutanoate + NADPH + H(+). Its pathway is amino-acid biosynthesis; L-isoleucine biosynthesis; L-isoleucine from 2-oxobutanoate: step 2/4. It participates in amino-acid biosynthesis; L-valine biosynthesis; L-valine from pyruvate: step 2/4. In terms of biological role, involved in the biosynthesis of branched-chain amino acids (BCAA). Catalyzes an alkyl-migration followed by a ketol-acid reduction of (S)-2-acetolactate (S2AL) to yield (R)-2,3-dihydroxy-isovalerate. In the isomerase reaction, S2AL is rearranged via a Mg-dependent methyl migration to produce 3-hydroxy-3-methyl-2-ketobutyrate (HMKB). In the reductase reaction, this 2-ketoacid undergoes a metal-dependent reduction by NADPH to yield (R)-2,3-dihydroxy-isovalerate. This chain is Ketol-acid reductoisomerase (NADP(+)), found in Rhodospirillum rubrum (strain ATCC 11170 / ATH 1.1.1 / DSM 467 / LMG 4362 / NCIMB 8255 / S1).